The chain runs to 140 residues: Putative pre-16S rRNA nuclease (140 aa).

This sequence belongs to the YqgF nuclease family.

It is found in the cytoplasm. Functionally, could be a nuclease involved in processing of the 5'-end of pre-16S rRNA. The polypeptide is Putative pre-16S rRNA nuclease (Mannheimia succiniciproducens (strain KCTC 0769BP / MBEL55E)).